The following is a 332-amino-acid chain: Fructose-1,6-bisphosphatase class 1 (332 aa).

Mg(2+) contacts are provided by glutamate 89, aspartate 110, leucine 112, and aspartate 113. Residues 113-116 (DGSS), asparagine 206, tyrosine 239, 257-259 (YLY), and lysine 269 contribute to the substrate site. Glutamate 275 is a binding site for Mg(2+).

It belongs to the FBPase class 1 family. Homotetramer. The cofactor is Mg(2+).

Its subcellular location is the cytoplasm. It carries out the reaction beta-D-fructose 1,6-bisphosphate + H2O = beta-D-fructose 6-phosphate + phosphate. Its pathway is carbohydrate biosynthesis; gluconeogenesis. This chain is Fructose-1,6-bisphosphatase class 1, found in Escherichia coli (strain ATCC 8739 / DSM 1576 / NBRC 3972 / NCIMB 8545 / WDCM 00012 / Crooks).